Here is a 750-residue protein sequence, read N- to C-terminus: Retron Eco8 OLD nuclease (750 aa).

Positions 1-173 (MTIESIRVKN…IDLYDWNPIW (173 aa)) are ATPase domain N-terminus. 33–37 (NVGKS) provides a ligand contact to ATP. Positions 174–260 (KLISNLNSFN…TQSDGTNSNK (87 aa)) are dimerization domain. Residues 261–390 (FLETLLHLLI…FSDNEARLFF (130 aa)) form an ATPase domain C-terminus region. The interval 391–704 (SEYIVFVEGA…SGWVTTFLNY (314 aa)) is toprim domain. The a divalent metal cation site is built by E398, E402, D450, D452, S623, and E641.

It belongs to the class 1 OLD nuclease family. Homodimer. Requires a divalent metal cation as cofactor.

Its function is as follows. Probable nuclease member of antiviral defense system retron Eco8, composed of an reverse transcriptase (RT), this nuclease and a non-coding RNA (ncRNA) encoded between them. Expression of retron Eco8 confers protection against bacteriophages T4, T6, T7 and SECphi4, SECphi6 and SECphi18. At multiplicity of infection (MOI) of 0.02 cultures slow growth when infected with SECphi4 but do not collapse, at MOI 2 cultures collapse. When the retron is cloned in another E.coli strain synthesizes msDNA (a branched RNA linked by a 2',5'-phosphodiester bond to a single-stranded DNA). The retron transcript serves as primer and template to the reaction, and codes for the RT. The protein is Retron Eco8 OLD nuclease of Escherichia coli.